The chain runs to 553 residues: Putative transport protein YidE (553 aa).

The next 5 helical transmembrane spans lie at 4–24, 28–48, 65–85, 95–115, and 158–178; these read IALT…IGNV, GIGL…HFVS, FGLI…FFAS, LFAV…HKLF, and MSYA…MWML. 2 consecutive RCK C-terminal domains span residues 191–276 and 279–361; these read QQHE…VIGQ and DTSL…VLGN. A run of 6 helical transmembrane segments spans residues 371–391, 393–413, 431–448, 464–484, 493–513, and 533–553; these read MLPV…PVFV, GFPA…ALIL, NLAL…VVGL, LSWI…VGIL, YLTM…LAFA, and LVMF…WSIG.

Belongs to the AAE transporter (TC 2.A.81) family. YidE subfamily.

It is found in the cell membrane. The sequence is that of Putative transport protein YidE from Shigella sonnei (strain Ss046).